The primary structure comprises 88 residues: Apolipoprotein C-I (88 aa).

The first 26 residues, 1–26, serve as a signal peptide directing secretion; that stretch reads MRLFIALPVLIVVVAMTLEGPAPAQA.

It belongs to the apolipoprotein C1 family. As to expression, adult and fetal liver.

It is found in the secreted. Inhibitor of lipoprotein binding to the low density lipoprotein (LDL) receptor, LDL receptor-related protein, and very low density lipoprotein (VLDL) receptor. Associates with high density lipoproteins (HDL) and the triacylglycerol-rich lipoproteins in the plasma and makes up about 10% of the protein of the VLDL and 2% of that of HDL. Appears to interfere directly with fatty acid uptake and is also the major plasma inhibitor of cholesteryl ester transfer protein (CETP). Modulates the interaction of APOE with beta-migrating VLDL and inhibits binding of beta-VLDL to the LDL receptor-related protein. Binds free fatty acids and reduces their intracellular esterification. This chain is Apolipoprotein C-I (Apoc1), found in Mus musculus (Mouse).